The primary structure comprises 251 residues: Aspartate/glutamate leucyltransferase (251 aa).

Belongs to the R-transferase family. Bpt subfamily.

Its subcellular location is the cytoplasm. It catalyses the reaction N-terminal L-glutamyl-[protein] + L-leucyl-tRNA(Leu) = N-terminal L-leucyl-L-glutamyl-[protein] + tRNA(Leu) + H(+). The catalysed reaction is N-terminal L-aspartyl-[protein] + L-leucyl-tRNA(Leu) = N-terminal L-leucyl-L-aspartyl-[protein] + tRNA(Leu) + H(+). Functions in the N-end rule pathway of protein degradation where it conjugates Leu from its aminoacyl-tRNA to the N-termini of proteins containing an N-terminal aspartate or glutamate. The polypeptide is Aspartate/glutamate leucyltransferase (Xanthomonas axonopodis pv. citri (strain 306)).